The sequence spans 117 residues: MGSTAILALLLAVLQGVCAEVQLVQSGAEVKKPGESLKISCKGSGYSFTSYWIGWVRQMPGKGLEWMGIIYPGDSDTRYSPSFQGQVTISADKSISTAYLQWSSLKASDTAMYYCAR.

Residues 1–19 (MGSTAILALLLAVLQGVCA) form the signal peptide. The tract at residues 20-44 (EVQLVQSGAEVKKPGESLKISCKGS) is framework-1. One can recognise an Ig-like domain in the interval 20–117 (EVQLVQSGAE…SDTAMYYCAR (98 aa)). Cysteine 41 and cysteine 115 form a disulfide bridge. A complementarity-determining-1 region spans residues 45-52 (GYSFTSYW). The interval 53 to 69 (IGWVRQMPGKGLEWMGI) is framework-2. The segment at 70 to 77 (IYPGDSDT) is complementarity-determining-2. A framework-3 region spans residues 78-115 (RYSPSFQGQVTISADKSISTAYLQWSSLKASDTAMYYC). The segment at 116–117 (AR) is complementarity-determining-3.

In terms of assembly, immunoglobulins are composed of two identical heavy chains and two identical light chains; disulfide-linked.

The protein resides in the secreted. Its subcellular location is the cell membrane. Its function is as follows. V region of the variable domain of immunoglobulin heavy chains that participates in the antigen recognition. Immunoglobulins, also known as antibodies, are membrane-bound or secreted glycoproteins produced by B lymphocytes. In the recognition phase of humoral immunity, the membrane-bound immunoglobulins serve as receptors which, upon binding of a specific antigen, trigger the clonal expansion and differentiation of B lymphocytes into immunoglobulins-secreting plasma cells. Secreted immunoglobulins mediate the effector phase of humoral immunity, which results in the elimination of bound antigens. The antigen binding site is formed by the variable domain of one heavy chain, together with that of its associated light chain. Thus, each immunoglobulin has two antigen binding sites with remarkable affinity for a particular antigen. The variable domains are assembled by a process called V-(D)-J rearrangement and can then be subjected to somatic hypermutations which, after exposure to antigen and selection, allow affinity maturation for a particular antigen. This is Immunoglobulin heavy variable 5-51 from Homo sapiens (Human).